A 554-amino-acid chain; its full sequence is ATP synthase subunit alpha (554 aa).

173-180 (GDRQTGKT) serves as a coordination point for ATP. Residues 531-554 (SHLAAEKVRKHVPPSKPTTQRTAG) are disordered.

Belongs to the ATPase alpha/beta chains family. F-type ATPases have 2 components, CF(1) - the catalytic core - and CF(0) - the membrane proton channel. CF(1) has five subunits: alpha(3), beta(3), gamma(1), delta(1), epsilon(1). CF(0) has three main subunits: a(1), b(2) and c(9-12). The alpha and beta chains form an alternating ring which encloses part of the gamma chain. CF(1) is attached to CF(0) by a central stalk formed by the gamma and epsilon chains, while a peripheral stalk is formed by the delta and b chains.

It is found in the cell membrane. The enzyme catalyses ATP + H2O + 4 H(+)(in) = ADP + phosphate + 5 H(+)(out). Produces ATP from ADP in the presence of a proton gradient across the membrane. The alpha chain is a regulatory subunit. The protein is ATP synthase subunit alpha of Acidothermus cellulolyticus (strain ATCC 43068 / DSM 8971 / 11B).